The sequence spans 112 residues: Cell cycle protein GpsB (112 aa).

Positions 38-72 (IKDYEAFHKEFEQLKQQNARLKRELEEQKLVATQV) form a coiled coil.

This sequence belongs to the GpsB family. Forms polymers through the coiled coil domains. Interacts with PBP1, MreC and EzrA.

It is found in the cytoplasm. Divisome component that associates with the complex late in its assembly, after the Z-ring is formed, and is dependent on DivIC and PBP2B for its recruitment to the divisome. Together with EzrA, is a key component of the system that regulates PBP1 localization during cell cycle progression. Its main role could be the removal of PBP1 from the cell pole after pole maturation is completed. Also contributes to the recruitment of PBP1 to the division complex. Not essential for septum formation. The sequence is that of Cell cycle protein GpsB from Bacillus cereus (strain ZK / E33L).